A 523-amino-acid chain; its full sequence is Peptide chain release factor 3 (523 aa).

The region spanning 10–277 is the tr-type G domain; it reads EKRRTFAIIS…SFVDLAPAPE (268 aa). GTP contacts are provided by residues 19–26, 87–91, and 141–144; these read SHPDAGKT, DTPGH, and NKLD.

The protein belongs to the TRAFAC class translation factor GTPase superfamily. Classic translation factor GTPase family. PrfC subfamily.

The protein resides in the cytoplasm. Increases the formation of ribosomal termination complexes and stimulates activities of RF-1 and RF-2. It binds guanine nucleotides and has strong preference for UGA stop codons. It may interact directly with the ribosome. The stimulation of RF-1 and RF-2 is significantly reduced by GTP and GDP, but not by GMP. This Lactobacillus acidophilus (strain ATCC 700396 / NCK56 / N2 / NCFM) protein is Peptide chain release factor 3.